The sequence spans 225 residues: Small ribosomal subunit protein uS3 (225 aa).

The KH type-2 domain maps to 39-109 (IYRFFNKFTR…ELKLNIEVVN (71 aa)).

The protein belongs to the universal ribosomal protein uS3 family. In terms of assembly, part of the 30S ribosomal subunit. Forms a tight complex with proteins S10 and S14.

Binds the lower part of the 30S subunit head. Binds mRNA in the 70S ribosome, positioning it for translation. The polypeptide is Small ribosomal subunit protein uS3 (Mycoplasma mobile (strain ATCC 43663 / 163K / NCTC 11711) (Mesomycoplasma mobile)).